Here is a 68-residue protein sequence, read N- to C-terminus: Conotoxin VnMMSK-01 (68 aa).

A signal peptide spans 1-20 (MMSKLGVLLTICLLLFPLTA). Residues 21–50 (VPMDGDQPADLPALRTQDFEPERSPWFDPV) constitute a propeptide that is removed on maturation. 3 disulfides stabilise this stretch: Cys-53/Cys-65, Cys-54/Cys-61, and Cys-58/Cys-64. Position 63 is a 4-hydroxyproline (Pro-63).

This sequence belongs to the conotoxin M superfamily. In terms of tissue distribution, expressed by the venom duct.

Its subcellular location is the secreted. This Conus ventricosus (Mediterranean cone) protein is Conotoxin VnMMSK-01.